The following is a 293-amino-acid chain: Large ribosomal subunit protein uL18 (293 aa).

The span at Ile247–Val263 shows a compositional bias: basic and acidic residues. The segment at Ile247–Gln283 is disordered. Positions Lys264–Gln283 are enriched in basic residues.

This sequence belongs to the universal ribosomal protein uL18 family. As to quaternary structure, component of the large ribosomal subunit (LSU).

The protein resides in the cytoplasm. It is found in the nucleus. Component of the ribosome, a large ribonucleoprotein complex responsible for the synthesis of proteins in the cell. The small ribosomal subunit (SSU) binds messenger RNAs (mRNAs) and translates the encoded message by selecting cognate aminoacyl-transfer RNA (tRNA) molecules. The large subunit (LSU) contains the ribosomal catalytic site termed the peptidyl transferase center (PTC), which catalyzes the formation of peptide bonds, thereby polymerizing the amino acids delivered by tRNAs into a polypeptide chain. The nascent polypeptides leave the ribosome through a tunnel in the LSU and interact with protein factors that function in enzymatic processing, targeting, and the membrane insertion of nascent chains at the exit of the ribosomal tunnel. The sequence is that of Large ribosomal subunit protein uL18 (RPL5) from Suberites domuncula (Sponge).